The following is a 323-amino-acid chain: GQPKAPSVFPLAPCCGDTPSSTVTLGCLVKGYLPEPVTVTWNSGTLTNGVRTFPSVRQSSGLYSLSSVVSVTSSSQPVTCNVAHPATNTKVDKTVAPSTCSKPTCPPPELLGGPSVFIFPPKPKDTLMISRTPEVTCVVVDVSQDDPEVQFTWYINNEQVRTARPPLREQQFNSTIRVVSTLPITHQDWLRGKEFKCKVHNKALPAPIEKTISKARGQPLEPKVYTMGPPREELSSRSVSLTCMINGFYPSDISVEWEKNGKAEDNYKTTPAVLDSDGSYFLYNKLSVPTSEWQRGDVFTCSVMHEALHNHYTQKSISRSPGK.

3 Ig-like domains span residues 6-96 (PSVF…KTVA), 114-213 (PSVF…KTIS), and 222-318 (PKVY…KSIS).

The sequence is that of Ig gamma chain C region from Oryctolagus cuniculus (Rabbit).